The following is a 140-amino-acid chain: UPF0336 protein TW736 (140 aa).

Belongs to the UPF0336 family.

The chain is UPF0336 protein TW736 from Tropheryma whipplei (strain TW08/27) (Whipple's bacillus).